Reading from the N-terminus, the 551-residue chain is Probable 4-coumarate--CoA ligase 2 (551 aa).

The ATP site is built by serine 205, serine 206, glycine 207, threonine 208, threonine 209, and lysine 213. Residues tyrosine 253 and threonine 257 each coordinate (E)-4-coumaroyl-AMP. Residue lysine 274 participates in CoA binding. The tract at residues 276–346 (EFVRFLDLIQ…RFKGKLIIKQ (71 aa)) is SBD1. 4 residues coordinate (E)-4-coumaroyl-AMP: alanine 323, glutamine 346, glycine 347, and threonine 351. Residues glutamine 346, glycine 347, threonine 351, aspartate 430, and arginine 445 each contribute to the ATP site. Residues 347-409 (GYGATELSPA…IKGPNVMLGY (63 aa)) form an SBD2 region. Positions 447 and 451 each coordinate (E)-4-coumaroyl-AMP. CoA contacts are provided by lysine 453 and glycine 454. Lysine 537 is an ATP binding site.

Belongs to the ATP-dependent AMP-binding enzyme family. Mg(2+) serves as cofactor.

The enzyme catalyses (E)-4-coumarate + ATP + CoA = (E)-4-coumaroyl-CoA + AMP + diphosphate. It catalyses the reaction (E)-4-coumarate + ATP + H(+) = (E)-4-coumaroyl-AMP + diphosphate. The catalysed reaction is (E)-4-coumaroyl-AMP + CoA = (E)-4-coumaroyl-CoA + AMP + H(+). It functions in the pathway phytoalexin biosynthesis; 3,4',5-trihydroxystilbene biosynthesis; 3,4',5-trihydroxystilbene from trans-4-coumarate: step 1/2. Functionally, carboxylate--CoA ligase that may use 4-coumarate as substrate. Follows a two-step reaction mechanism, wherein the carboxylate substrate first undergoes adenylation by ATP, followed by a thioesterification in the presence of CoA to yield the final CoA thioester. The chain is Probable 4-coumarate--CoA ligase 2 (4cl2) from Dictyostelium discoideum (Social amoeba).